A 303-amino-acid chain; its full sequence is Aspartate carbamoyltransferase catalytic subunit (303 aa).

Residues Arg49 and Thr50 each coordinate carbamoyl phosphate. L-aspartate is bound at residue Lys77. Carbamoyl phosphate is bound by residues Arg99, His126, and Gln129. Residues Arg159 and Arg211 each coordinate L-aspartate. Residues Ser252 and Pro253 each contribute to the carbamoyl phosphate site.

This sequence belongs to the aspartate/ornithine carbamoyltransferase superfamily. ATCase family. As to quaternary structure, heterododecamer (2C3:3R2) of six catalytic PyrB chains organized as two trimers (C3), and six regulatory PyrI chains organized as three dimers (R2).

It carries out the reaction carbamoyl phosphate + L-aspartate = N-carbamoyl-L-aspartate + phosphate + H(+). The protein operates within pyrimidine metabolism; UMP biosynthesis via de novo pathway; (S)-dihydroorotate from bicarbonate: step 2/3. In terms of biological role, catalyzes the condensation of carbamoyl phosphate and aspartate to form carbamoyl aspartate and inorganic phosphate, the committed step in the de novo pyrimidine nucleotide biosynthesis pathway. The chain is Aspartate carbamoyltransferase catalytic subunit from Listeria welshimeri serovar 6b (strain ATCC 35897 / DSM 20650 / CCUG 15529 / CIP 8149 / NCTC 11857 / SLCC 5334 / V8).